The chain runs to 820 residues: Nuclear pore complex protein Nup93 (820 aa).

This sequence belongs to the nucleoporin interacting component (NIC) family.

The protein resides in the nucleus membrane. It is found in the nucleus. The protein localises to the nuclear pore complex. In terms of biological role, plays a role in the nuclear pore complex (NPC) assembly and/or maintenance. In Xenopus laevis (African clawed frog), this protein is Nuclear pore complex protein Nup93 (nup93).